A 348-amino-acid chain; its full sequence is Phosphoribosylformylglycinamidine cyclo-ligase (348 aa).

Belongs to the AIR synthase family.

It is found in the cytoplasm. It catalyses the reaction 2-formamido-N(1)-(5-O-phospho-beta-D-ribosyl)acetamidine + ATP = 5-amino-1-(5-phospho-beta-D-ribosyl)imidazole + ADP + phosphate + H(+). Its pathway is purine metabolism; IMP biosynthesis via de novo pathway; 5-amino-1-(5-phospho-D-ribosyl)imidazole from N(2)-formyl-N(1)-(5-phospho-D-ribosyl)glycinamide: step 2/2. The sequence is that of Phosphoribosylformylglycinamidine cyclo-ligase from Geotalea daltonii (strain DSM 22248 / JCM 15807 / FRC-32) (Geobacter daltonii).